The sequence spans 372 residues: tRNA-specific 2-thiouridylase MnmA (372 aa).

ATP-binding positions include 11–18 (GMSGGVDS) and M37. Residues 97–99 (NPD) form an interaction with target base in tRNA region. Residue C102 is the Nucleophile of the active site. A disulfide bridge connects residues C102 and C199. G126 is an ATP binding site. The interaction with tRNA stretch occupies residues 149–151 (KDQ). C199 serves as the catalytic Cysteine persulfide intermediate. The interval 309–310 (RY) is interaction with tRNA.

Belongs to the MnmA/TRMU family.

Its subcellular location is the cytoplasm. The catalysed reaction is S-sulfanyl-L-cysteinyl-[protein] + uridine(34) in tRNA + AH2 + ATP = 2-thiouridine(34) in tRNA + L-cysteinyl-[protein] + A + AMP + diphosphate + H(+). Functionally, catalyzes the 2-thiolation of uridine at the wobble position (U34) of tRNA, leading to the formation of s(2)U34. The sequence is that of tRNA-specific 2-thiouridylase MnmA from Staphylococcus epidermidis (strain ATCC 35984 / DSM 28319 / BCRC 17069 / CCUG 31568 / BM 3577 / RP62A).